Consider the following 434-residue polypeptide: Putative ZDHHC-type palmitoyltransferase 1 (434 aa).

A run of 2 helical transmembrane segments spans residues 25–45 (AYFIVAMILMLIPEIPFLIFV) and 53–73 (ITAAIYPVSIYFWIASYIFLI). The 51-residue stretch at 115-165 (KWCETCCLYRPPRANHCGICNNCVERFDHHCPWVGNCIGRRNYQTFLYFLY) folds into the DHHC domain. The active-site S-palmitoyl cysteine intermediate is the Cys-145. The helical transmembrane segment at 160 to 180 (FLYFLYSLGFLCIWIMGFCVA) threads the bilayer. Asn-207, Asn-216, Asn-274, Asn-346, Asn-362, Asn-373, Asn-381, Asn-387, and Asn-393 each carry an N-linked (GlcNAc...) asparagine glycan. The disordered stretch occupies residues 262–330 (TIPTPNNING…ISPPQMLQRQ (69 aa)). Low complexity predominate over residues 267 to 316 (NNINGNNNNSINNNNNNNNNNNNNNNNNNNNNNNNNNINNGNSGGTTNNG). A disordered region spans residues 365–434 (TISEDKPKNL…SLNHELQVNV (70 aa)). Low complexity predominate over residues 373–387 (NLSNSNNNNNTNNKN). Positions 409 to 419 (DDFKSDNDKEI) are enriched in basic and acidic residues. N-linked (GlcNAc...) asparagine glycosylation is present at Asn-420. Positions 420-434 (NSSSLSLNHELQVNV) are enriched in polar residues.

Belongs to the DHHC palmitoyltransferase family.

It localises to the membrane. The enzyme catalyses L-cysteinyl-[protein] + hexadecanoyl-CoA = S-hexadecanoyl-L-cysteinyl-[protein] + CoA. The sequence is that of Putative ZDHHC-type palmitoyltransferase 1 from Dictyostelium discoideum (Social amoeba).